The sequence spans 254 residues: Thiazole synthase (254 aa).

Lys-96 functions as the Schiff-base intermediate with DXP in the catalytic mechanism. Residues Gly-157, Ala-183–Gly-184, and Asn-205–Thr-206 contribute to the 1-deoxy-D-xylulose 5-phosphate site.

It belongs to the ThiG family. Homotetramer. Forms heterodimers with either ThiH or ThiS.

The protein resides in the cytoplasm. It catalyses the reaction [ThiS sulfur-carrier protein]-C-terminal-Gly-aminoethanethioate + 2-iminoacetate + 1-deoxy-D-xylulose 5-phosphate = [ThiS sulfur-carrier protein]-C-terminal Gly-Gly + 2-[(2R,5Z)-2-carboxy-4-methylthiazol-5(2H)-ylidene]ethyl phosphate + 2 H2O + H(+). It participates in cofactor biosynthesis; thiamine diphosphate biosynthesis. In terms of biological role, catalyzes the rearrangement of 1-deoxy-D-xylulose 5-phosphate (DXP) to produce the thiazole phosphate moiety of thiamine. Sulfur is provided by the thiocarboxylate moiety of the carrier protein ThiS. In vitro, sulfur can be provided by H(2)S. This Clostridium perfringens (strain 13 / Type A) protein is Thiazole synthase.